The following is an 836-amino-acid chain: V-type proton ATPase subunit C (836 aa).

A compositionally biased stretch (basic residues) spans 116 to 144; it reads LSLRHQRKHQHTHHQNKPQHYHHHHHHHQ. 4 disordered regions span residues 116-169, 302-403, 415-453, and 496-544; these read LSLR…ASAP, APTT…SVQS, KPKRNSKKSSAQQQHETAQLQHQQTTQQHATPLTPQNHN, and PSQL…PLSP. Positions 160–169 are enriched in pro residues; sequence ATPPAPASAP. The segment covering 302–316 has biased composition (low complexity); sequence APTTSSSVHSSMSRS. Composition is skewed to polar residues over residues 319–348 and 364–374; these read KRLNNNTCSINNNKLSFRSGSHVSQLHLAT and TNPLQSPVQKS. A compositionally biased stretch (low complexity) spans 425 to 450; the sequence is AQQQHETAQLQHQQTTQQHATPLTPQ. Polar residues predominate over residues 496 to 511; the sequence is PSQLNINNGFNLTPTH. Over residues 512-529 the composition is skewed to low complexity; the sequence is RSSPVSSCCGSSSQGRSS.

This sequence belongs to the V-ATPase C subunit family. In terms of assembly, V-ATPase is a heteromultimeric enzyme made up of two complexes: the ATP-hydrolytic V1 complex and the proton translocation V0 complex. The V1 complex consists of three catalytic AB heterodimers that form a heterohexamer, three peripheral stalks each consisting of EG heterodimers, one central rotor including subunits D and F, and the regulatory subunits C and H. The proton translocation complex V0 consists of the proton transport subunit a, a ring of proteolipid subunits c9c'', rotary subunit d, subunits e and f, and the accessory subunits VhaAC45 and ATP6AP2. In terms of tissue distribution, in larvae, expressed in the ring gland, CNS, imaginal disks and lymph gland.

Subunit of the V1 complex of vacuolar(H+)-ATPase (V-ATPase), a multisubunit enzyme composed of a peripheral complex (V1) that hydrolyzes ATP and a membrane integral complex (V0) that translocates protons. V-ATPase is responsible for acidifying and maintaining the pH of intracellular compartments and in some cell types, is targeted to the plasma membrane, where it is responsible for acidifying the extracellular environment. Subunit C is necessary for the assembly of the catalytic sector of the enzyme and is likely to have a specific function in its catalytic activity. In enterocytes, acts as part of a pHCl-2 sensory pathway which mediates Tor-dependent larval growth and metabolism in response to zinc availability. Likely acts in maintaining enterocyte lysosomal acidification which consequently promotes Tor activation at the lysosome membrane. The polypeptide is V-type proton ATPase subunit C (Vha44) (Drosophila melanogaster (Fruit fly)).